Consider the following 229-residue polypeptide: Cytidylate kinase (229 aa).

ATP is bound at residue 12 to 20; it reads GPSGSGKGT.

This sequence belongs to the cytidylate kinase family. Type 1 subfamily.

Its subcellular location is the cytoplasm. The enzyme catalyses CMP + ATP = CDP + ADP. It catalyses the reaction dCMP + ATP = dCDP + ADP. This Pseudomonas fluorescens (strain ATCC BAA-477 / NRRL B-23932 / Pf-5) protein is Cytidylate kinase.